A 353-amino-acid chain; its full sequence is Inositol-tetrakisphosphate 1-kinase 3 (353 aa).

The tract at residues 1–25 is disordered; it reads MKLTDNEEITMNGTREMETTEQETS. 1D-myo-inositol 1,3,4-trisphosphate is bound by residues Lys50 and Lys92. The ATP site is built by Arg127 and Lys177. Residues 138–350 form the ATP-grasp domain; sequence NLSDSNGRVG…QSQCKKRALA (213 aa). Residues His188 and Lys220 each contribute to the 1D-myo-inositol 1,3,4-trisphosphate site. ATP contacts are provided by residues 209 to 220 and Ser235; that span reads QEFVNHGGVLFK. The Mg(2+) site is built by Asp300, Asp315, and Asn317. Asn317 is a binding site for 1D-myo-inositol 1,3,4-trisphosphate.

It belongs to the ITPK1 family. As to quaternary structure, monomer. It depends on Mg(2+) as a cofactor. As to expression, highly expressed in leaves and flowers, and at lower levels in roots, stems, cauline leaves and siliques.

It catalyses the reaction 1D-myo-inositol 3,4,5,6-tetrakisphosphate + ATP = 1D-myo-inositol 1,3,4,5,6-pentakisphosphate + ADP + H(+). The catalysed reaction is 1D-myo-inositol 1,3,4-trisphosphate + ATP = 1D-myo-inositol 1,3,4,5-tetrakisphosphate + ADP + H(+). It carries out the reaction 1D-myo-inositol 1,3,4-trisphosphate + ATP = 1D-myo-inositol 1,3,4,6-tetrakisphosphate + ADP + H(+). Functionally, kinase that can phosphorylate various inositol polyphosphate such as Ins(3,4,5,6)P4 or Ins(1,3,4)P3. Phosphorylates Ins(3,4,5,6)P4 to form InsP5. This reaction is thought to have regulatory importance, since Ins(3,4,5,6)P4 is an inhibitor of plasma membrane Ca(2+)-activated Cl(-) channels, while Ins(1,3,4,5,6)P5 is not. Also phosphorylates Ins(1,3,4)P3 or a racemic mixture of Ins(1,4,6)P3 and Ins(3,4,6)P3 to form InsP4. Ins(1,3,4,6)P4 is an essential molecule in the hexakisphosphate (InsP6) pathway. The polypeptide is Inositol-tetrakisphosphate 1-kinase 3 (ITPK3) (Arabidopsis thaliana (Mouse-ear cress)).